The chain runs to 504 residues: Protein psiD (504 aa).

A signal peptide spans 1–21; it reads MKYSYLLLILLLSNLYKEGFS. Asn-87, Asn-136, Asn-236, Asn-252, Asn-290, and Asn-373 each carry an N-linked (GlcNAc...) asparagine glycan. The PA14 domain occupies 111 to 251; the sequence is LTRVGDSTYA…YDACGVCDGH (141 aa). The segment covering 417–430 has biased composition (low complexity); sequence TVTPTVTPTVTPTP. Residues 417-453 form a disordered region; it reads TVTPTVTPTVTPTPTTTPTPSPTTVPPRPTPTPLPAD. Pro residues predominate over residues 431 to 453; the sequence is TTTPTPSPTTVPPRPTPTPLPAD. An N-linked (GlcNAc...) asparagine glycan is attached at Asn-483.

It belongs to the prespore-cell-inducing factor family.

It is found in the secreted. The protein is Protein psiD (psiD) of Dictyostelium discoideum (Social amoeba).